An 81-amino-acid polypeptide reads, in one-letter code: uncharacterized protein (81 aa).

This is an uncharacterized protein from Homo sapiens (Human).